The primary structure comprises 467 residues: Glutamyl-tRNA(Gln) amidotransferase subunit A (467 aa).

Active-site charge relay system residues include K57 and S132. The active-site Acyl-ester intermediate is S156.

This sequence belongs to the amidase family. GatA subfamily. As to quaternary structure, heterotrimer of A, B and C subunits.

The enzyme catalyses L-glutamyl-tRNA(Gln) + L-glutamine + ATP + H2O = L-glutaminyl-tRNA(Gln) + L-glutamate + ADP + phosphate + H(+). Functionally, allows the formation of correctly charged Gln-tRNA(Gln) through the transamidation of misacylated Glu-tRNA(Gln) in organisms which lack glutaminyl-tRNA synthetase. The reaction takes place in the presence of glutamine and ATP through an activated gamma-phospho-Glu-tRNA(Gln). This chain is Glutamyl-tRNA(Gln) amidotransferase subunit A, found in Pseudothermotoga lettingae (strain ATCC BAA-301 / DSM 14385 / NBRC 107922 / TMO) (Thermotoga lettingae).